Consider the following 215-residue polypeptide: Protein C' (215 aa).

The segment at 12–34 (MPSFLKKILKLRGRRQEDESRSR) is disordered. The segment at 15-22 (FLKKILKL) is involved in self-degradation and in host STAT1 degradation. A compositionally biased stretch (basic and acidic residues) spans 25 to 35 (RRQEDESRSRM). Residues 36–66 (LSDSSTQSYQVNQLTSEGTEAGSTIPSTPSK) are compositionally biased toward polar residues.

It belongs to the respirovirus protein C family. In terms of assembly, the different isoforms interact (via C-terminus) with unphosphorylated and phosphorylated human STAT1 (via N-terminus), favoring the formation of parallel STAT1 homodimers. The different isoforms do not interact with host STAT2. C protein interacts with L protein; this interaction has an inhibitory effect on viral transcription and replication. In terms of processing, protein Y1 is produced not only by alternative initiation, but also by proteolytic cleavage of C'. Only alternative initiation is detected in vitro, whereas in vivo cleavage seems to be predominant.

It localises to the host cytoplasm. The different products prevent the establishment of cellular antiviral state by blocking the interferon-alpha/beta (IFN-alpha/beta) and IFN-gamma signaling pathways. They inhibit IFN-alpha/beta induced tyrosine phosphorylation of STAT1 and STAT2. Blocking the IFN-alpha/beta pathway requires binding to STAT1 in the cytoplasm. They inhibit IFN-gamma induced serine phosphorylation of STAT1. Block the IFN-gamma pathway by binding to and stabilizing the parallel form of the STAT1 dimer, further inducing high-molecular-weight complex formation and inhibition of transcription by IFN-gamma. May also have a role in preventing the cell to enter apoptosis. Modulate regulation of viral transcription and replication. Overexpression inhibits the viral RNA polymerase. The absence of all C', C and Y1 proteins leads to viral delayed growth. Plays an important role in virion particles release. Modulates virion shape. The sequence is that of Protein C' (P/V/C) from Sendai virus (strain Ohita) (SeV).